We begin with the raw amino-acid sequence, 393 residues long: Digeranylgeranylglycerophospholipid reductase (393 aa).

Residues Ala-13, Asp-32, Cys-43, Ala-44, Gly-46, Arg-95, Val-119, Asp-274, and Gly-286 each contribute to the FAD site. Residues Lys-327 and Gly-363 each coordinate a 2,3-bis-O-(geranylgeranyl)-sn-glycerol 1-phospholipid.

This sequence belongs to the geranylgeranyl reductase family. DGGGPL reductase subfamily. Requires FAD as cofactor.

It catalyses the reaction a 2,3-bis-O-phytanyl-sn-glycerol 1-phospholipid + 8 A = a 2,3-bis-O-(geranylgeranyl)-sn-glycerol 1-phospholipid + 8 AH2. The enzyme catalyses 2,3-bis-O-(phytanyl)-sn-glycerol 1-phosphate + 8 A = 2,3-bis-O-(geranylgeranyl)-sn-glycerol 1-phosphate + 8 AH2. It carries out the reaction CDP-2,3-bis-O-(geranylgeranyl)-sn-glycerol + 8 AH2 = CDP-2,3-bis-O-(phytanyl)-sn-glycerol + 8 A. The catalysed reaction is archaetidylserine + 8 AH2 = 2,3-bis-O-phytanyl-sn-glycero-3-phospho-L-serine + 8 A. The protein operates within membrane lipid metabolism; glycerophospholipid metabolism. Is involved in the reduction of 2,3-digeranylgeranylglycerophospholipids (unsaturated archaeols) into 2,3-diphytanylglycerophospholipids (saturated archaeols) in the biosynthesis of archaeal membrane lipids. Catalyzes the formation of archaetidic acid (2,3-di-O-phytanyl-sn-glyceryl phosphate) from 2,3-di-O-geranylgeranylglyceryl phosphate (DGGGP) via the hydrogenation of each double bond of the isoprenoid chains. Is also probably able to reduce double bonds of geranyl groups in CDP-2,3-bis-O-(geranylgeranyl)-sn-glycerol and archaetidylserine, thus acting at various stages in the biosynthesis of archaeal membrane lipids. This is Digeranylgeranylglycerophospholipid reductase from Pyrococcus furiosus (strain ATCC 43587 / DSM 3638 / JCM 8422 / Vc1).